The sequence spans 252 residues: tRNA (guanine-N(7)-)-methyltransferase (252 aa).

Residues Glu-75, Glu-100, Asp-127, and Asp-150 each coordinate S-adenosyl-L-methionine. Asp-150 is a catalytic residue. Lys-154 serves as a coordination point for substrate. Residues 156–161 (RHNKRR) are interaction with RNA. Substrate is bound by residues Asp-186 and 223–226 (THFE).

This sequence belongs to the class I-like SAM-binding methyltransferase superfamily. TrmB family.

It carries out the reaction guanosine(46) in tRNA + S-adenosyl-L-methionine = N(7)-methylguanosine(46) in tRNA + S-adenosyl-L-homocysteine. It participates in tRNA modification; N(7)-methylguanine-tRNA biosynthesis. In terms of biological role, catalyzes the formation of N(7)-methylguanine at position 46 (m7G46) in tRNA. This chain is tRNA (guanine-N(7)-)-methyltransferase, found in Xanthomonas oryzae pv. oryzae (strain MAFF 311018).